We begin with the raw amino-acid sequence, 493 residues long: Cytochrome c-552 (493 aa).

The first 25 residues, 1 to 25 (MEKKLKSWQGWLLFCGAMAVVFVLG), serve as a signal peptide directing secretion. A heme c-binding site is contributed by histidine 116. 3 residues coordinate heme: cysteine 144, cysteine 147, and lysine 148. Residues cysteine 182, cysteine 185, histidine 186, cysteine 224, cysteine 227, and histidine 228 each coordinate heme c. Residues glutamate 230, tyrosine 231, lysine 276, and glutamine 278 each contribute to the Ca(2+) site. Residue tyrosine 231 coordinates substrate. Residue histidine 279 coordinates substrate. The heme c site is built by histidine 290, cysteine 297, cysteine 300, histidine 301, histidine 315, cysteine 328, cysteine 331, histidine 332, and histidine 407.

This sequence belongs to the cytochrome c-552 family. It depends on Ca(2+) as a cofactor. Requires heme c as cofactor.

The protein localises to the periplasm. It catalyses the reaction 6 Fe(III)-[cytochrome c] + NH4(+) + 2 H2O = 6 Fe(II)-[cytochrome c] + nitrite + 8 H(+). The protein operates within nitrogen metabolism; nitrate reduction (assimilation). Its function is as follows. Catalyzes the reduction of nitrite to ammonia, consuming six electrons in the process. The polypeptide is Cytochrome c-552 (Bacteroides fragilis (strain ATCC 25285 / DSM 2151 / CCUG 4856 / JCM 11019 / LMG 10263 / NCTC 9343 / Onslow / VPI 2553 / EN-2)).